Here is a 552-residue protein sequence, read N- to C-terminus: Probable protein kinase UbiB (552 aa).

In terms of domain architecture, Protein kinase spans 121–504 (HFDTVPLASA…QGLQRRVVNA (384 aa)). ATP contacts are provided by residues 127 to 135 (LASASISQV) and K149. Catalysis depends on D284, which acts as the Proton acceptor. The next 2 helical transmembrane spans lie at 501-521 (VVNA…YGLH) and 530-550 (IPVW…SAWW).

Belongs to the ABC1 family. UbiB subfamily.

It localises to the cell inner membrane. It participates in cofactor biosynthesis; ubiquinone biosynthesis [regulation]. Functionally, is probably a protein kinase regulator of UbiI activity which is involved in aerobic coenzyme Q (ubiquinone) biosynthesis. The sequence is that of Probable protein kinase UbiB from Xylella fastidiosa (strain M12).